The primary structure comprises 329 residues: Quinolinate synthase (329 aa).

Iminosuccinate is bound by residues histidine 44 and serine 61. Cysteine 106 contributes to the [4Fe-4S] cluster binding site. Iminosuccinate-binding positions include 132-134 (YIN) and serine 149. Residue cysteine 192 coordinates [4Fe-4S] cluster. Residues 218–220 (HPE) and threonine 235 contribute to the iminosuccinate site. Residue cysteine 285 participates in [4Fe-4S] cluster binding.

This sequence belongs to the quinolinate synthase family. Type 2 subfamily. [4Fe-4S] cluster serves as cofactor.

It localises to the plastid. The protein localises to the cyanelle. The enzyme catalyses iminosuccinate + dihydroxyacetone phosphate = quinolinate + phosphate + 2 H2O + H(+). It participates in cofactor biosynthesis; NAD(+) biosynthesis; quinolinate from iminoaspartate: step 1/1. Its function is as follows. Catalyzes the condensation of iminoaspartate with dihydroxyacetone phosphate to form quinolinate. The protein is Quinolinate synthase of Cyanophora paradoxa.